The chain runs to 436 residues: MHIVVVGVSHRTAPVEVREKLSIPDHSITESLKALKAFSEVLEVSILSTCNRLEIYALAKDKNTGISSIKEFLSEYSGIIFEDLDPHLFCFRQEEAVLHLMKVSAGLDSLVLGEGQILSQVKKMMRLGQENQSTGPILNRLLTQSVSTGKKVRSETNLGTGAVSISSAAVELAQLKIGQEKGFDTLVSLESENVLVVGAGRMSRLLITHLKSKGCHKLILVNRNIDRALNLAQDFPDLKIVCRGLNELDENISISSLVFTSTASEVPIIDLAKIEKLNLNNKLKFIDIGVPRNISNDVKQHEFVKSFDVDDLQEVVSRNQEFRQKIAKEAESLVEEERIIFLEWWASLEAVPVINKLRSDLELIRKEELQKALSRMGPDFSARERKVVEALTKGIINKILHTPVTKLRSPQSREERQVSLKIVEKLFSLAEEDKNN.

Substrate-binding positions include 49-52, Ser-109, 114-116, and Gln-120; these read TCNR and EGQ. Catalysis depends on Cys-50, which acts as the Nucleophile. 198–203 contacts NADP(+); sequence GAGRMS.

Belongs to the glutamyl-tRNA reductase family. Homodimer.

It carries out the reaction (S)-4-amino-5-oxopentanoate + tRNA(Glu) + NADP(+) = L-glutamyl-tRNA(Glu) + NADPH + H(+). Its pathway is porphyrin-containing compound metabolism; protoporphyrin-IX biosynthesis; 5-aminolevulinate from L-glutamyl-tRNA(Glu): step 1/2. The protein operates within porphyrin-containing compound metabolism; chlorophyll biosynthesis. In terms of biological role, catalyzes the NADPH-dependent reduction of glutamyl-tRNA(Glu) to glutamate 1-semialdehyde (GSA). This is Glutamyl-tRNA reductase from Prochlorococcus marinus (strain MIT 9215).